Here is a 296-residue protein sequence, read N- to C-terminus: Sulfotransferase 1C2 (296 aa).

49-54 (KSGTTW) contacts 3'-phosphoadenylyl sulfate. Substrate is bound at residue 107 to 109 (RTH). The active-site Proton acceptor is histidine 109. Residues arginine 131, serine 139, tyrosine 194, and 228–233 (TSFEKM) contribute to the 3'-phosphoadenylyl sulfate site. Serine 139 is modified (phosphoserine). A Phosphoserine modification is found at serine 254. 256–260 (FMRKG) is a 3'-phosphoadenylyl sulfate binding site.

Belongs to the sulfotransferase 1 family. As to expression, highly expressed in kidney and at lower levels in stomach and liver. More specifically found in the epithelia of proximal tubules of the kidney, of the bile duct, of the gastric mucosa, and in hepatocytes.

The protein resides in the cytoplasm. Its subcellular location is the lysosome. The protein localises to the mitochondrion. The catalysed reaction is a phenol + 3'-phosphoadenylyl sulfate = an aryl sulfate + adenosine 3',5'-bisphosphate + H(+). The enzyme catalyses cholesterol + 3'-phosphoadenylyl sulfate = cholesterol sulfate + adenosine 3',5'-bisphosphate + H(+). Its function is as follows. Sulfotransferase that utilizes 3'-phospho-5'-adenylyl sulfate (PAPS) to catalyze the sulfate conjugation of phenolic compounds. Does not transfer sulfate to steroids, dopamine, acetaminophen, or alpha-naphthol. Except in mitochondria, where it can add sulfate to cholesterol producing cholesterol sulfate, which alters mitochondrial membrane organization, and impacts protein complex mobility increasing state-III respiration, thereby modulating mitochondrial respiration. Catalyzes the sulfation of the carcinogenic N-hydroxy-2-acetylaminofluorene leading to highly reactive intermediates capable of forming DNA adducts, potentially resulting in mutagenesis. The protein is Sulfotransferase 1C2 (Sult1c2) of Rattus norvegicus (Rat).